A 400-amino-acid polypeptide reads, in one-letter code: Ribosomal RNA large subunit methyltransferase I (400 aa).

Positions phenylalanine 6 to glutamate 84 constitute a PUA domain.

Belongs to the methyltransferase superfamily. RlmI family.

The protein resides in the cytoplasm. It catalyses the reaction cytidine(1962) in 23S rRNA + S-adenosyl-L-methionine = 5-methylcytidine(1962) in 23S rRNA + S-adenosyl-L-homocysteine + H(+). Its function is as follows. Specifically methylates the cytosine at position 1962 (m5C1962) of 23S rRNA. This is Ribosomal RNA large subunit methyltransferase I from Klebsiella pneumoniae (strain 342).